The chain runs to 358 residues: B3 domain-containing protein Os12g0592300 (358 aa).

The TF-B3 1 DNA-binding region spans 25–122 (RIRFFRLMTG…SFDVLIFDAS (98 aa)). The interval 148–215 (YHLSDSEDTS…EKSDDDDEHA (68 aa)) is disordered. The segment covering 156 to 181 (TSTPSTFLVGSPHKASTSKKLNGKTK) has biased composition (polar residues). The segment covering 203–215 (IEEEKSDDDDEHA) has biased composition (acidic residues). Residues 252–350 (FVTVLQAPQI…TMTVHVIGKV (99 aa)) constitute a DNA-binding region (TF-B3 2).

It localises to the nucleus. The chain is B3 domain-containing protein Os12g0592300 from Oryza sativa subsp. japonica (Rice).